Here is a 365-residue protein sequence, read N- to C-terminus: Protein BZR1 homolog 2 (365 aa).

Over residues 1–30 the composition is skewed to gly residues; the sequence is MATGGGGGGGGMGGGGVGGGAGAAGVGVGG. 4 disordered regions span residues 1–45, 113–154, 191–236, and 344–365; these read MATG…KRRE, SPSP…NMAN, SAPV…TPPS, and HEDSGSDDLELTLGSSRTRAAA. The interval 31 to 113 is required for DNA-binding; that stretch reads RMPTWREREN…RMEVIGCSVS (83 aa). Residues 113–144 show a composition bias toward low complexity; the sequence is SPSPCSSYQPSPRASYNASPTSSSFPSGASSP. 2 stretches are compositionally biased toward polar residues: residues 215 to 233 and 356 to 365; these read SNVQPTWTGSNSPCVVNST and LGSSRTRAAA.

The protein belongs to the BZR/LAT61 family. As to quaternary structure, interacts with PUB24.

Functionally, may function in brassinosteroid signaling. This Oryza sativa subsp. japonica (Rice) protein is Protein BZR1 homolog 2.